A 267-amino-acid polypeptide reads, in one-letter code: Alpha carbonic anhydrase 4 (267 aa).

The first 26 residues, 1-26, serve as a signal peptide directing secretion; that stretch reads MDTNAKTIFFMAMCFIYLSFPNISHA. A glycan (N-linked (GlcNAc...) asparagine) is linked at Asn22. Positions 34–264 constitute an Alpha-carbonic anhydrase domain; sequence TPFTYEQKTE…SKGRSVWFYD (231 aa). The cysteines at positions 59 and 214 are disulfide-linked. The Proton acceptor role is filled by His99. His125 and His127 together coordinate Zn(2+). Residue Asn135 is glycosylated (N-linked (GlcNAc...) asparagine). A Zn(2+)-binding site is contributed by His144. 210–211 serves as a coordination point for substrate; that stretch reads TV.

This sequence belongs to the alpha-class carbonic anhydrase family. The cofactor is Zn(2+). In terms of processing, N-glycosylated.

Its subcellular location is the plastid. It is found in the chloroplast stroma. It carries out the reaction hydrogencarbonate + H(+) = CO2 + H2O. Its function is as follows. Reversible hydration of carbon dioxide. This chain is Alpha carbonic anhydrase 4 (ACA4), found in Arabidopsis thaliana (Mouse-ear cress).